A 792-amino-acid chain; its full sequence is Alpha-1,6-mannosylglycoprotein 6-beta-N-acetylglucosaminyltransferase B (792 aa).

The Cytoplasmic segment spans residues M1 to L24. The chain crosses the membrane as a helical; Signal-anchor for type II membrane protein span at residues F25 to F45. At S46–L792 the chain is on the lumenal side. N127 carries an N-linked (GlcNAc...) asparagine glycan. 9 disulfide bridges follow: C157-C195, C168-C208, C184-C353, C387-C644, C700-C775, C704-C777, C711-C764, C732-C753, and C788-C791.

The protein belongs to the glycosyltransferase 18 family. Mn(2+) serves as cofactor. As to expression, predominantly expressed in brain. Expressed in all areas of the adult and fetal brain. Also expressed at much lower levels in testis, spleen and thymus.

The protein localises to the golgi apparatus membrane. It catalyses the reaction N(4)-{beta-D-GlcNAc-(1-&gt;2)-[beta-D-GlcNAc-(1-&gt;4)]-alpha-D-Man-(1-&gt;3)-[beta-D-GlcNAc-(1-&gt;2)-alpha-D-Man-(1-&gt;6)]-beta-D-Man-(1-&gt;4)-beta-D-GlcNAc-(1-&gt;4)-beta-D-GlcNAc}-L-asparaginyl-[protein] + UDP-N-acetyl-alpha-D-glucosamine = N(4)-{beta-D-GlcNAc-(1-&gt;2)-[beta-D-GlcNAc-(1-&gt;4)]-alpha-D-Man-(1-&gt;3)-[beta-D-GlcNAc-(1-&gt;2)-[beta-D-GlcNAc-(1-&gt;6)]-alpha-D-Man-(1-&gt;6)]-beta-D-Man-(1-&gt;4)-beta-D-GlcNAc-(1-&gt;4)-beta-D-GlcNAc}-L-asparaginyl-[protein] + UDP + H(+). The catalysed reaction is 3-O-[N-acetyl-beta-D-glucosaminyl-(1-&gt;2)-alpha-D-mannosyl]-L-seryl-[protein] + UDP-N-acetyl-alpha-D-glucosamine = O(3)-{N-acetyl-beta-D-glucosaminyl-(1-&gt;2)-[N-acetyl-beta-D-glucosaminyl-(1-&gt;6)]-alpha-D-mannosyl}-L-seryl-[protein] + UDP + H(+). The enzyme catalyses 3-O-[N-acetyl-beta-D-glucosaminyl-(1-&gt;2)-alpha-D-mannosyl]-L-threonyl-[protein] + UDP-N-acetyl-alpha-D-glucosamine = O(3)-{N-acetyl-beta-D-glucosaminyl-(1-&gt;2)-[N-acetyl-beta-D-glucosaminyl-(1-&gt;6)]-alpha-D-mannosyl}-L-threonyl-[protein] + UDP + H(+). It functions in the pathway protein modification; protein glycosylation. Its function is as follows. Glycosyltransferase that acts on alpha-linked mannose of N-glycans and O-mannosyl glycans. Catalyzes the transfer of N-acetylglucosamine (GlcNAc) to the beta 1-6 linkage of the mannose residue of GlcNAc-beta1,2-Man-alpha on both the alpha1,3- and alpha1,6-linked mannose arms in the core structure of N-glycan. Also acts on the GlcNAc-beta1,2-Man-alpha1-Ser/Thr moiety, forming a 2,6-branched structure in brain O-mannosyl glycan. Plays an active role in modulating integrin and laminin-dependent adhesion and migration of neuronal cells via its activity in the O-mannosyl glycan pathway. This Homo sapiens (Human) protein is Alpha-1,6-mannosylglycoprotein 6-beta-N-acetylglucosaminyltransferase B (MGAT5B).